The primary structure comprises 439 residues: Proline--tRNA ligase (439 aa).

It belongs to the class-II aminoacyl-tRNA synthetase family. ProS type 2 subfamily. Homodimer.

Its subcellular location is the cytoplasm. It catalyses the reaction tRNA(Pro) + L-proline + ATP = L-prolyl-tRNA(Pro) + AMP + diphosphate. Functionally, catalyzes the attachment of proline to tRNA(Pro) in a two-step reaction: proline is first activated by ATP to form Pro-AMP and then transferred to the acceptor end of tRNA(Pro). This is Proline--tRNA ligase from Parvibaculum lavamentivorans (strain DS-1 / DSM 13023 / NCIMB 13966).